Consider the following 258-residue polypeptide: Phosphate import ATP-binding protein PstB 2 (258 aa).

Residues 12–253 enclose the ABC transporter domain; the sequence is IQVRDLNFYY…PRQKQTEDYI (242 aa). 44–51 lines the ATP pocket; that stretch reads GPSGCGKS.

Belongs to the ABC transporter superfamily. Phosphate importer (TC 3.A.1.7) family. As to quaternary structure, the complex is composed of two ATP-binding proteins (PstB), two transmembrane proteins (PstC and PstA) and a solute-binding protein (PstS).

It is found in the cell inner membrane. It carries out the reaction phosphate(out) + ATP + H2O = ADP + 2 phosphate(in) + H(+). Part of the ABC transporter complex PstSACB involved in phosphate import. Responsible for energy coupling to the transport system. This Pectobacterium atrosepticum (strain SCRI 1043 / ATCC BAA-672) (Erwinia carotovora subsp. atroseptica) protein is Phosphate import ATP-binding protein PstB 2.